Reading from the N-terminus, the 328-residue chain is D-cysteine desulfhydrase (328 aa).

Lysine 51 is subject to N6-(pyridoxal phosphate)lysine.

The protein belongs to the ACC deaminase/D-cysteine desulfhydrase family. As to quaternary structure, homodimer. It depends on pyridoxal 5'-phosphate as a cofactor.

The enzyme catalyses D-cysteine + H2O = hydrogen sulfide + pyruvate + NH4(+) + H(+). Its function is as follows. Catalyzes the alpha,beta-elimination reaction of D-cysteine and of several D-cysteine derivatives. It could be a defense mechanism against D-cysteine. This Salmonella typhi protein is D-cysteine desulfhydrase.